Consider the following 409-residue polypeptide: Aspartate aminotransferase, cytoplasmic (409 aa).

Serine 2 is subject to N-acetylserine. 3 residues coordinate L-aspartate: glycine 38, tryptophan 138, and asparagine 191. Residue lysine 255 is modified to N6-(pyridoxal phosphate)lysine. Arginine 383 lines the L-aspartate pocket. A Phosphoserine modification is found at serine 385.

It belongs to the class-I pyridoxal-phosphate-dependent aminotransferase family. As to quaternary structure, homodimer. Pyridoxal 5'-phosphate serves as cofactor.

It is found in the cytoplasm. It catalyses the reaction L-aspartate + 2-oxoglutarate = oxaloacetate + L-glutamate. Its function is as follows. Plays a key role in amino acid metabolism. This Schizosaccharomyces pombe (strain 972 / ATCC 24843) (Fission yeast) protein is Aspartate aminotransferase, cytoplasmic.